The chain runs to 492 residues: Protein nucleotidyltransferase YdiU (492 aa).

8 residues coordinate ATP: G95, G97, R98, K118, D130, G131, R181, and R188. Residue D257 is the Proton acceptor of the active site. 2 residues coordinate Mg(2+): N258 and D267. D267 is a binding site for ATP. A compositionally biased stretch (basic and acidic residues) spans 466-475; sequence YDDQPEHAEY. The tract at residues 466–492 is disordered; it reads YDDQPEHAEYRQPPPPSEKPYQTFCGT.

It belongs to the SELO family. It depends on Mg(2+) as a cofactor. Requires Mn(2+) as cofactor.

The catalysed reaction is L-seryl-[protein] + ATP = 3-O-(5'-adenylyl)-L-seryl-[protein] + diphosphate. The enzyme catalyses L-threonyl-[protein] + ATP = 3-O-(5'-adenylyl)-L-threonyl-[protein] + diphosphate. It catalyses the reaction L-tyrosyl-[protein] + ATP = O-(5'-adenylyl)-L-tyrosyl-[protein] + diphosphate. It carries out the reaction L-histidyl-[protein] + UTP = N(tele)-(5'-uridylyl)-L-histidyl-[protein] + diphosphate. The catalysed reaction is L-seryl-[protein] + UTP = O-(5'-uridylyl)-L-seryl-[protein] + diphosphate. The enzyme catalyses L-tyrosyl-[protein] + UTP = O-(5'-uridylyl)-L-tyrosyl-[protein] + diphosphate. Nucleotidyltransferase involved in the post-translational modification of proteins. It can catalyze the addition of adenosine monophosphate (AMP) or uridine monophosphate (UMP) to a protein, resulting in modifications known as AMPylation and UMPylation. The polypeptide is Protein nucleotidyltransferase YdiU (Syntrophotalea carbinolica (strain DSM 2380 / NBRC 103641 / GraBd1) (Pelobacter carbinolicus)).